We begin with the raw amino-acid sequence, 106 residues long: Putative regulatory protein MalR (106 aa).

Residues 12–106 form the HTH hxlR-type domain; the sequence is CSIEYTLSFM…NLMHKWGQEN (95 aa).

Its function is as follows. Potential regulator of the malBH genes. The sequence is that of Putative regulatory protein MalR (malR) from Fusobacterium mortiferum.